Here is a 104-residue protein sequence, read N- to C-terminus: ATP-dependent Clp protease adapter protein ClpS (104 aa).

Belongs to the ClpS family. As to quaternary structure, binds to the N-terminal domain of the chaperone ClpA.

Its function is as follows. Involved in the modulation of the specificity of the ClpAP-mediated ATP-dependent protein degradation. This Burkholderia thailandensis (strain ATCC 700388 / DSM 13276 / CCUG 48851 / CIP 106301 / E264) protein is ATP-dependent Clp protease adapter protein ClpS.